Reading from the N-terminus, the 274-residue chain is Bis(5'-nucleosyl)-tetraphosphatase, symmetrical (274 aa).

It belongs to the Ap4A hydrolase family.

It catalyses the reaction P(1),P(4)-bis(5'-adenosyl) tetraphosphate + H2O = 2 ADP + 2 H(+). Hydrolyzes diadenosine 5',5'''-P1,P4-tetraphosphate to yield ADP. The polypeptide is Bis(5'-nucleosyl)-tetraphosphatase, symmetrical (Shewanella baltica (strain OS223)).